The primary structure comprises 121 residues: Homeobox protein HD-6 (121 aa).

Positions P28–Y87 form a DNA-binding region, homeobox.

It localises to the nucleus. The chain is Homeobox protein HD-6 (HD-6) from Encephalitozoon cuniculi (strain GB-M1) (Microsporidian parasite).